The following is a 144-amino-acid chain: Large ribosomal subunit protein uL16 (144 aa).

Residues 1-14 (MLMPKRVKYRKPHR) are compositionally biased toward basic residues. Residues 1–25 (MLMPKRVKYRKPHRPGTQGKATRGN) are disordered.

This sequence belongs to the universal ribosomal protein uL16 family. As to quaternary structure, part of the 50S ribosomal subunit.

In terms of biological role, binds 23S rRNA and is also seen to make contacts with the A and possibly P site tRNAs. The chain is Large ribosomal subunit protein uL16 from Moorella thermoacetica (strain ATCC 39073 / JCM 9320).